Consider the following 86-residue polypeptide: Large ribosomal subunit protein eL43 (86 aa).

The C4-type zinc finger occupies 38–59 (CPVCGRKAVRRISTGIWQCQKC).

It belongs to the eukaryotic ribosomal protein eL43 family. Zn(2+) serves as cofactor.

The chain is Large ribosomal subunit protein eL43 from Thermococcus onnurineus (strain NA1).